We begin with the raw amino-acid sequence, 249 residues long: Chitooligosaccharide deacetylase (249 aa).

Residues His61 and His125 each coordinate Mg(2+).

This sequence belongs to the YdjC deacetylase family. ChbG subfamily. As to quaternary structure, homodimer. It depends on Mg(2+) as a cofactor.

It localises to the cytoplasm. The enzyme catalyses N,N'-diacetylchitobiose + H2O = N-acetyl-beta-D-glucosaminyl-(1-&gt;4)-D-glucosamine + acetate. The catalysed reaction is diacetylchitobiose-6'-phosphate + H2O = N'-monoacetylchitobiose-6'-phosphate + acetate. It functions in the pathway glycan degradation; chitin degradation. Its function is as follows. Involved in the degradation of chitin. ChbG is essential for growth on the acetylated chitooligosaccharides chitobiose and chitotriose but is dispensable for growth on cellobiose and chitosan dimer, the deacetylated form of chitobiose. Deacetylation of chitobiose-6-P and chitotriose-6-P is necessary for both the activation of the chb promoter by the regulatory protein ChbR and the hydrolysis of phosphorylated beta-glucosides by the phospho-beta-glucosidase ChbF. Catalyzes the removal of only one acetyl group from chitobiose-6-P to yield monoacetylchitobiose-6-P, the inducer of ChbR and the substrate of ChbF. The protein is Chitooligosaccharide deacetylase of Escherichia coli O9:H4 (strain HS).